The chain runs to 561 residues: Serine palmitoyltransferase 2 (561 aa).

A helical membrane pass occupies residues 57–77 (PYYISLLTYLNYLILIILGHV). N6-(pyridoxal phosphate)lysine is present on Lys-366. The chain crosses the membrane as a helical span at residues 443 to 463 (LGFIVYGVADSPVIPLLLYCP).

It belongs to the class-II pyridoxal-phosphate-dependent aminotransferase family. LCB1 and LCB2 encode essential subunits of the enzyme and form a heterodimer. Component of the SPOTS complex, at least composed of LCB1/2 (LCB1 and/or LCB2), ORM1/2 (ORM1 and/or ORM2), SAC1 and TSC3. Interacts with LCB1 and TSC3. The cofactor is pyridoxal 5'-phosphate.

Its subcellular location is the cytoplasm. It is found in the endoplasmic reticulum. The protein resides in the membrane. It catalyses the reaction L-serine + hexadecanoyl-CoA + H(+) = 3-oxosphinganine + CO2 + CoA. It functions in the pathway lipid metabolism; sphingolipid metabolism. Its function is as follows. Catalytic subunit of serine palmitoyltransferase (SPT), which catalyzes the committed step in the synthesis of sphingolipids, the condensation of serine with palmitoyl CoA to form the long chain base 3-ketosphinganine. This Saccharomyces cerevisiae (strain ATCC 204508 / S288c) (Baker's yeast) protein is Serine palmitoyltransferase 2 (LCB2).